The following is a 60-amino-acid chain: KEKYRVVYTDHQRLELEKEFHCNRYITIRRKSELAVNLGLSERQVKSWFQNRRAKERKII.

The segment at residues 1 to 60 is a DNA-binding region (homeobox); it reads KEKYRVVYTDHQRLELEKEFHCNRYITIRRKSELAVNLGLSERQVKSWFQNRRAKERKII.

This sequence belongs to the Caudal homeobox family.

It is found in the nucleus. This chain is Homeobox protein CHOX-CAD2 (CHOX-CAD2), found in Gallus gallus (Chicken).